Consider the following 96-residue polypeptide: DNA-binding protein Saci_1468 (96 aa).

The protein belongs to the PDCD5 family.

In Sulfolobus acidocaldarius (strain ATCC 33909 / DSM 639 / JCM 8929 / NBRC 15157 / NCIMB 11770), this protein is DNA-binding protein Saci_1468.